We begin with the raw amino-acid sequence, 472 residues long: Protein nucleotidyltransferase YdiU (472 aa).

ATP is bound by residues glycine 86, glycine 88, arginine 89, lysine 109, aspartate 121, glycine 122, arginine 172, and arginine 179. The active-site Proton acceptor is aspartate 244. Asparagine 245 and aspartate 254 together coordinate Mg(2+). An ATP-binding site is contributed by aspartate 254.

Belongs to the SELO family. It depends on Mg(2+) as a cofactor. Mn(2+) is required as a cofactor.

It catalyses the reaction L-seryl-[protein] + ATP = 3-O-(5'-adenylyl)-L-seryl-[protein] + diphosphate. It carries out the reaction L-threonyl-[protein] + ATP = 3-O-(5'-adenylyl)-L-threonyl-[protein] + diphosphate. The catalysed reaction is L-tyrosyl-[protein] + ATP = O-(5'-adenylyl)-L-tyrosyl-[protein] + diphosphate. The enzyme catalyses L-histidyl-[protein] + UTP = N(tele)-(5'-uridylyl)-L-histidyl-[protein] + diphosphate. It catalyses the reaction L-seryl-[protein] + UTP = O-(5'-uridylyl)-L-seryl-[protein] + diphosphate. It carries out the reaction L-tyrosyl-[protein] + UTP = O-(5'-uridylyl)-L-tyrosyl-[protein] + diphosphate. Nucleotidyltransferase involved in the post-translational modification of proteins. It can catalyze the addition of adenosine monophosphate (AMP) or uridine monophosphate (UMP) to a protein, resulting in modifications known as AMPylation and UMPylation. The chain is Protein nucleotidyltransferase YdiU from Ruegeria sp. (strain TM1040) (Silicibacter sp.).